The primary structure comprises 677 residues: MDDPDCDSTWEEDEEDAEDAEDEDCEDGEAAGARDADAGDEDEESEEPRAARPSSFQSRMTGSRNWRATRDMCRYRHNYPDLVERDCNGDTPNLSFYRNEIRFLPNGCFIEDILQNWTDNYDLLEDNHSYIQWLFPLREPGVNWHAKPLTLREVEVFKSSQEIQERLVRAYELMLGFYGIRLEDRGTGTVGRAQNYQKRFQNLNWRSHNNLRITRILKSLGELGLEHFQAPLVRFFLEETLVRRELPGVRQSALDYFMFAVRCRHQRRQLVHFAWEHFRPRCKFVWGPQDKLRRFKPSSLPHPLEGSRKVEEEGSPGDPDHEASTQGRTCGPEHSKGGGRVDEGPQPRSVEPQDAGPLERSQGDEAGGHGEDRPEPLSPKESKKRKLELSRREQPPTEPGPQSASEVEKIALNLEGCALSQGSLRTGTQEVGGQDPGEAVQPCRQPLGARVADKVRKRRKVDEGAGDSAAVASGGAQTLALAGSPAPSGHPKAGHSENGVEEDTEGRTGPKEGTPGSPSETPGPSPAGPAGDEPAESPSETPGPRPAGPAGDEPAESPSETPGPRPAGPAGDEPAESPSETPGPSPAGPTRDEPAESPSETPGPRPAGPAGDEPAESPSETPGPRPAGPAGDEPAESPSETPGPSPAGPTRDEPAKAGEAAELQDAEVESSAKSGKP.

Methionine 1 carries the post-translational modification N-acetylmethionine. The segment covering 1 to 29 (MDDPDCDSTWEEDEEDAEDAEDEDCEDGE) has biased composition (acidic residues). The interval 1–63 (MDDPDCDSTW…SSFQSRMTGS (63 aa)) is disordered. Residues 54–63 (SSFQSRMTGS) show a composition bias toward polar residues. Positions 267-283 (RRQLVHFAWEHFRPRCK) match the Bipartite nuclear localization signal motif. The disordered stretch occupies residues 295-407 (FKPSSLPHPL…EPGPQSASEV (113 aa)). Residues serine 299 and serine 315 each carry the phosphoserine modification. Basic and acidic residues-rich tracts occupy residues 305 to 323 (EGSR…DHEA) and 331 to 345 (GPEH…DEGP). Serine 349, serine 361, serine 378, serine 382, serine 403, and serine 420 each carry phosphoserine. Residues 361–395 (SQGDEAGGHGEDRPEPLSPKESKKRKLELSRREQP) show a composition bias toward basic and acidic residues. Positions 421 to 431 (QGSLRTGTQEV) are enriched in polar residues. A disordered region spans residues 421 to 677 (QGSLRTGTQE…VESSAKSGKP (257 aa)). Over residues 466–476 (GDSAAVASGGA) the composition is skewed to low complexity. A Phosphoserine modification is found at serine 484. Repeat copies occupy residues 517–536 (SPSE…EPAE), 537–556 (SPSE…EPAE), 557–576 (SPSE…EPAE), 577–596 (SPSE…EPAE), 597–616 (SPSE…EPAE), 617–636 (SPSE…EPAE), and 637–656 (SPSE…EPAK). A 7 X 20 AA approximate tandem repeats of [ST]-P-S-E-T-P-G-P-[SR]-P-A-G-P-[AT]-[GR]-D-E-P-A-[EK] region spans residues 517–656 (SPSETPGPSP…AGPTRDEPAK (140 aa)). Positions 528–538 (GPAGDEPAESP) are enriched in low complexity. Residues serine 537 and serine 557 each carry the phosphoserine modification. Phosphoserine occurs at positions 617 and 637.

This sequence belongs to the opioid growth factor receptor family. In terms of tissue distribution, highly expressed in the heart and liver, moderately in skeletal muscle and kidney and to a lesser extent in brain and pancreas. Expressed in fetal tissues including liver and kidney.

It is found in the cytoplasm. The protein resides in the nucleus. Receptor for opioid growth factor (OGF), also known as Met-enkephalin. Seems to be involved in growth regulation. This chain is Opioid growth factor receptor (OGFR), found in Homo sapiens (Human).